We begin with the raw amino-acid sequence, 249 residues long: Ribonuclease PH (249 aa).

Residues Arg-90 and 128 to 130 (GTR) contribute to the phosphate site.

Belongs to the RNase PH family. As to quaternary structure, homohexameric ring arranged as a trimer of dimers.

The enzyme catalyses tRNA(n+1) + phosphate = tRNA(n) + a ribonucleoside 5'-diphosphate. Its function is as follows. Phosphorolytic 3'-5' exoribonuclease that plays an important role in tRNA 3'-end maturation. Removes nucleotide residues following the 3'-CCA terminus of tRNAs; can also add nucleotides to the ends of RNA molecules by using nucleoside diphosphates as substrates, but this may not be physiologically important. Probably plays a role in initiation of 16S rRNA degradation (leading to ribosome degradation) during starvation. The chain is Ribonuclease PH from Parasynechococcus marenigrum (strain WH8102).